The sequence spans 208 residues: Adapter protein MecA (208 aa).

The protein belongs to the MecA family. As to quaternary structure, homodimer.

Its function is as follows. Enables the recognition and targeting of unfolded and aggregated proteins to the ClpC protease or to other proteins involved in proteolysis. The polypeptide is Adapter protein MecA (Exiguobacterium sibiricum (strain DSM 17290 / CCUG 55495 / CIP 109462 / JCM 13490 / 255-15)).